Reading from the N-terminus, the 347-residue chain is Single-pass membrane and coiled-coil domain-containing protein 2 (347 aa).

The interval 1 to 89 (MMSLQLGTAG…PPSKPDEQEV (89 aa)) is disordered. Composition is skewed to basic and acidic residues over residues 10–21 (GKERQLAEKSRD), 36–51 (EMDH…DKPS), and 60–86 (YKMD…KPDE). A coiled-coil region spans residues 139–238 (DWLERINNII…MNVLNSKLEM (100 aa)). The residue at position 178 (S178) is a Phosphoserine. The interval 243 to 274 (GSDADSHNSEDVDTEQEEPLVPEASPSLSASP) is disordered. Residues 253 to 262 (DVDTEQEEPL) are compositionally biased toward acidic residues. Residues 263-273 (VPEASPSLSAS) are compositionally biased toward low complexity. A helical transmembrane segment spans residues 288-308 (LFVIVYVVTITGLSCYILFVD).

Its subcellular location is the membrane. This Mus musculus (Mouse) protein is Single-pass membrane and coiled-coil domain-containing protein 2 (Smco2).